The sequence spans 208 residues: Nascent polypeptide-associated complex subunit alpha (208 aa).

A compositionally biased stretch (basic and acidic residues) spans 1 to 19; sequence MSSSRIEELPDDDVPKTTV. Disordered stretches follow at residues 1–50 and 120–166; these read MSSS…HSRN and QLAA…VFDA. Acidic residues predominate over residues 21-34; the sequence is DAADSSESEVEGAE. An NAC-A/B domain is found at 48–113; sequence SRNEKKARKA…AKIEDLNSQA (66 aa). Residues 120 to 131 show a composition bias toward low complexity; that stretch reads QLAAAEAAGSNE. Positions 132–154 are enriched in basic and acidic residues; the sequence is HAGHDHASHDHGKGKAVESADKK. Acidic residues predominate over residues 155 to 164; that stretch reads DEEEDDEEVF. A UBA domain is found at 169–208; sequence LEAKDIELVMAQASVSRNKAIKALKENDNDIVNSIMALSV.

This sequence belongs to the NAC-alpha family. In terms of assembly, part of the nascent polypeptide-associated complex (NAC), consisting of EGD2 and EGD1. NAC associates with ribosomes via EGD1.

It is found in the cytoplasm. Its subcellular location is the nucleus. Component of the nascent polypeptide-associated complex (NAC), a dynamic component of the ribosomal exit tunnel, protecting the emerging polypeptides from interaction with other cytoplasmic proteins to ensure appropriate nascent protein targeting. The NAC complex also promotes mitochondrial protein import by enhancing productive ribosome interactions with the outer mitochondrial membrane and blocks the inappropriate interaction of ribosomes translating non-secretory nascent polypeptides with translocation sites in the membrane of the endoplasmic reticulum. EGD2 may also be involved in transcription regulation. This is Nascent polypeptide-associated complex subunit alpha (EGD2) from Ajellomyces capsulatus (strain NAm1 / WU24) (Darling's disease fungus).